The following is a 1187-amino-acid chain: DNA-directed RNA polymerase subunit beta (1187 aa).

Belongs to the RNA polymerase beta chain family. The RNAP catalytic core consists of 2 alpha, 1 beta, 1 beta' and 1 omega subunit. When a sigma factor is associated with the core the holoenzyme is formed, which can initiate transcription.

It carries out the reaction RNA(n) + a ribonucleoside 5'-triphosphate = RNA(n+1) + diphosphate. DNA-dependent RNA polymerase catalyzes the transcription of DNA into RNA using the four ribonucleoside triphosphates as substrates. This is DNA-directed RNA polymerase subunit beta from Petrotoga mobilis (strain DSM 10674 / SJ95).